Consider the following 255-residue polypeptide: Complement C1q-like protein 3 (255 aa).

Residues 1-20 form the signal peptide; the sequence is MVLLLVILIPVLVSSAGTSA. Residues 39-109 form a disordered region; that stretch reads KAPSTAATPD…GLPGPPGAPG (71 aa). One can recognise a Collagen-like domain in the interval 61–111; the sequence is GPKGEAGRPGKAGPRGPPGEPGPPGPVGPPGEKGEPGRQGLPGPPGAPGLN. The segment covering 75 to 89 has biased composition (pro residues); sequence RGPPGEPGPPGPVGP. A C1q domain is found at 122–255; the sequence is STVPKIAFYA…TFSGFIIYAD (134 aa).

In terms of assembly, forms homooligomers. Interacts with ADGRB3. Forms heterooligomers with C1QL2 and C1QL4, when proteins are coexpressed; this interaction does not occur after secretion. As to expression, highly expressed in brain and white adipose tissue. In gonadal fat pad, expressed at lower levels in adipocytes than in the stromal vascular fraction (VSP), which contains preadipocytes, fibroblasts, endothelial cells and occasional immune cells. Expression exhibits sexually dimorphism, with higher levels in females than in males (at protein level). Tends to be up-regulated in adipose tissue from obese males, but not females. Expressed in glial cells.

Its subcellular location is the secreted. Its function is as follows. May regulate the number of excitatory synapses that are formed on hippocampus neurons. Has no effect on inhibitory synapses. Plays a role in glucose homeostasis. Via AMPK signaling pathway, stimulates glucose uptake in adipocytes, myotubes and hepatocytes and enhances insulin-stimulated glucose uptake. In a hepatoma cell line, reduces the expression of gluconeogenic enzymes G6PC1 and PCK1 and hence decreases de novo glucose production. In Mus musculus (Mouse), this protein is Complement C1q-like protein 3 (C1ql3).